The primary structure comprises 1886 residues: Highly reducing polyketide synthase (1886 aa).

Positions 11-434 (TQDVAIVGLS…GANAHAVLDD (424 aa)) constitute a Ketosynthase family 3 (KS3) domain. Active-site for beta-ketoacyl synthase activity residues include cysteine 182, histidine 317, and histidine 357. A malonyl-CoA:ACP transacylase (MAT) domain region spans residues 483-568 (FLFSGQDQQS…VNNDLANTKK (86 aa)). The tract at residues 616 to 750 (RSLIGAPQPS…GLLSIEYESS (135 aa)) is N-terminal hotdog fold. The PKS/mFAS DH domain occupies 616-926 (RSLIGAPQPS…CTAISEATNP (311 aa)). The dehydratase (DH) domain stretch occupies residues 618–924 (LIGAPQPSYG…LHCTAISEAT (307 aa)). Histidine 648 (proton acceptor; for dehydratase activity) is an active-site residue. Residues 778–926 (HTTQSPKALY…CTAISEATNP (149 aa)) form a C-terminal hotdog fold region. The Proton donor; for dehydratase activity role is filled by aspartate 838. The enoylreductase (ER) domain stretch occupies residues 1169–1480 (GMLDEIYFEA…AGKHMGKVAL (312 aa)). A catalytic ketoreductase (KRc) domain region spans residues 1503–1681 (ATYVLVGGFG…VSLDLGLMRD (179 aa)). The region spanning 1802-1879 (DVTDLVLEIL…DLVDKIVAKS (78 aa)) is the Carrier domain. Residue serine 1839 is modified to O-(pantetheine 4'-phosphoryl)serine.

It participates in mycotoxin biosynthesis. Its function is as follows. Highly reducing polyketide synthase; part of the gene cluster that mediates the biosynthesis of the selective antifungal agent ascochitine, an o-quinone methide that plays a possible protective role against other microbial competitors in nature and is considered to be important for pathogenicity of legume-associated Didymella species. The pathway probably begins with the synthesis of a keto-aldehyde intermediate by the ascochitine non-reducing polyketide synthase pksAC from successive condensations of 4 malonyl-CoA units, presumably with a simple acetyl-CoA starter unit. Release of the keto-aldehyde intermediate is consistent with the presence of the C-terminal reductive release domain. The HR-PKS (orf7) probably makes a diketide starter unit which is passed to the non-reducing polyketide synthase pksAC for further extension, producing ascochital and ascochitine. The aldehyde dehydrogenase (orf1), the 2-oxoglutarate-dependent dioxygenase (orf3) and the dehydrogenase (orf9) are probably involved in subsequent oxidations of methyl groups to the carboxylic acid of the heterocyclic ring. The ascochitine gene cluster also includes a gene encoding a short peptide with a cupin domain (orf2) that is often found in secondary metabolite gene clusters and which function has still to be determined. The polypeptide is Highly reducing polyketide synthase (Didymella fabae (Leaf and pod spot disease fungus)).